A 391-amino-acid polypeptide reads, in one-letter code: MTAPQTPSSNFLWFLPTHGDGHYLGTSNGGRDVNFGYLRQIAQAADQLGYFGVLLPTGRSCEDSWVVASAVAPWTERLRYLVAVRPGLQSPSVAARMTATLDRLIGGRLLVNVVTGGDPVENKGDGVFLSHDERYEVTREFLNVYSDLLSGKTVNVAGKHITIEDGRLLFPPVQSPRPPLYFGGSSDAGIDVAADTVDKYLTWGEPPAQVAEKVNRVRAVAEQRGRKLSFGIRLHVIVRETNEAAWAAADDLIRYVTDDTIAAAQKVFARMDSVGQQRMSELHGGRRDKLEISPNLWAGVGLVRGGAGTALVGDPQTVAARIKEYQDVGIDTFILSGYPHLEEAYRFAELVFPLVKPQHAGNVTPLRANTGPFGETIANEHLPNAKQAVKP.

The protein belongs to the SsuD family.

The enzyme catalyses an alkanesulfonate + FMNH2 + O2 = an aldehyde + FMN + sulfite + H2O + 2 H(+). Functionally, catalyzes the desulfonation of aliphatic sulfonates. In Rhodopseudomonas palustris (strain ATCC BAA-98 / CGA009), this protein is Alkanesulfonate monooxygenase.